A 328-amino-acid chain; its full sequence is Malate dehydrogenase (328 aa).

Residue 12–18 coordinates NAD(+); that stretch reads GAAGQIG. Positions 95 and 101 each coordinate substrate. NAD(+)-binding positions include N108, Q115, and 132–134; that span reads VGN. Residues N134 and R165 each coordinate substrate. H190 functions as the Proton acceptor in the catalytic mechanism.

This sequence belongs to the LDH/MDH superfamily. MDH type 2 family.

The catalysed reaction is (S)-malate + NAD(+) = oxaloacetate + NADH + H(+). Catalyzes the reversible oxidation of malate to oxaloacetate. The protein is Malate dehydrogenase of Paracidovorax citrulli (strain AAC00-1) (Acidovorax citrulli).